The primary structure comprises 244 residues: tRNA (guanine-N(1)-)-methyltransferase (244 aa).

Residues Gly113 and 133-138 (IGDYVL) each bind S-adenosyl-L-methionine.

This sequence belongs to the RNA methyltransferase TrmD family. In terms of assembly, homodimer.

It is found in the cytoplasm. The catalysed reaction is guanosine(37) in tRNA + S-adenosyl-L-methionine = N(1)-methylguanosine(37) in tRNA + S-adenosyl-L-homocysteine + H(+). Specifically methylates guanosine-37 in various tRNAs. The sequence is that of tRNA (guanine-N(1)-)-methyltransferase from Bacillus anthracis (strain A0248).